The chain runs to 280 residues: Late embryogenesis abundant protein 76 (280 aa).

2 disordered regions span residues 1-156 (MASN…GEAV) and 220-241 (EEEDREHYPGTTTCTTQSTDPT). Positions 28–39 (MRDKAEEGKDKT) are enriched in basic and acidic residues. LEA 11-mer repeat repeat units lie at residues 31–41 (KAEEGKDKTSQ), 53–63 (TAQAAKDKTSQ), 75–85 (TAQAAKDKTSQ), 97–107 (TAQAAKDKTSQ), and 119–129 (TTQSSKEKTSQ). Residues 40-114 (SQTAQKAQQK…TSQAAQTTQQ (75 aa)) show a composition bias toward low complexity. Basic and acidic residues-rich tracts occupy residues 115–127 (KAHETTQSSKEKT) and 136–145 (EKARETKDKT). Over residues 230 to 239 (TTTCTTQSTD) the composition is skewed to low complexity.

The protein belongs to the LEA type 4 family.

In terms of biological role, lea proteins are late embryonic proteins abundant in higher plant seed embryos. The protein is Late embryogenesis abundant protein 76 of Brassica napus (Rape).